The following is a 727-amino-acid chain: MPDPSTYRPATGTIPVDPGVYKFRDPHGRVIYVGKAKSLRSRLNSYFADVSTLHPRTRQMVTTAGSVEWTVVSTEVEALQLEYNWIKEFDPRFNVRYRDDKTYPVLAVTLNEEYPRLFVYRGPRRKGVRYFGPYSHAWAIRETLDLLLRVFPARTCSAGVFKRHNQIGRPCLLGYIDKCSAPCVGRVSAAEHRKIVEDFCDFLSGRTDRLVRQLEARMQEASEELDFETAARLRDDVGALRRALEKQAVVLGDGTDADVAAFATDELEAAVQVFHVRGGRVRGQRGWVVEKAGDVIDWASVDSEAGSDLPLLVEQFLTQFYGEQAALSGATDQEAGTSGVPREVLVPVLPPDAEQVQEWLSGLRGSAVRLRVPQRGDKKALAETVQRNATEALQQHKLRRAGDFTSRSAALQGIQEALDLDSAPLRIECVDISHVQGTDVVASLVVFEDGLPRKSDYRHYAIKEAAGDGRSDDVASIAEVTRRRFLRHNRDVGVLRAEAAGADADQVSGGDGGDLAPEAAIDPQTGRPRRFAYPPNLFVVDGGAPQVAAASAVLDELGITDVAVIGLAKRLEEVWVPGEEDPVILPRTSESLYLLQRVRDEAHRFAITFHRSKRSRRMTASALDSVRGLGETRRKALVTHFGSVARLKQASVEEITAVPGIGTATAKAVLTALGAEEPSADVVGVGDDEPDRNGPGTAERNGADIPREPVEQHGPAAQSASQRTGVE.

Residues 16-95 enclose the GIY-YIG domain; that stretch reads VDPGVYKFRD…IKEFDPRFNV (80 aa). Residues 208–243 enclose the UVR domain; it reads DRLVRQLEARMQEASEELDFETAARLRDDVGALRRA. Disordered regions lie at residues 503–527 and 679–727; these read DADQ…QTGR and SADV…TGVE. A compositionally biased stretch (basic and acidic residues) spans 701–711; that stretch reads NGADIPREPVE. A compositionally biased stretch (polar residues) spans 718–727; it reads QSASQRTGVE.

Belongs to the UvrC family. Interacts with UvrB in an incision complex.

The protein resides in the cytoplasm. Its function is as follows. The UvrABC repair system catalyzes the recognition and processing of DNA lesions. UvrC both incises the 5' and 3' sides of the lesion. The N-terminal half is responsible for the 3' incision and the C-terminal half is responsible for the 5' incision. This Rhodococcus jostii (strain RHA1) protein is UvrABC system protein C.